Reading from the N-terminus, the 766-residue chain is Transcription factor GTE4 (766 aa).

Disordered regions lie at residues 87–108 (GTNS…PGDD), 234–262 (RDTT…PMEE), and 388–412 (GDKL…GDVG). The span at 238–250 (DAQQPAGLTSDSA) shows a compositional bias: polar residues. The region spanning 416–522 (GAGTKVFKNC…QIFEERWAVI (107 aa)) is the Bromo domain. Disordered regions lie at residues 544-606 (TMRS…NKRD) and 687-766 (ARAE…SDQT). Residues 574-589 (PTTTPGRTPTSATPSG) are compositionally biased toward low complexity. Positions 597 to 678 (PKANEPNKRD…NYKKGLSKKK (82 aa)) constitute an NET domain. Over residues 736 to 766 (SRSSSSSSSSSSSSSSDSDSDSSSSSGSDQT) the composition is skewed to low complexity.

Ubiquitously expressed.

Its subcellular location is the nucleus. Its function is as follows. Involved in the activation and maintenance of cell division in the meristems and by this controls cell numbers in differentiated organs. Its action in cell cycle regulation may be directed through the RB-E2F pathway. The polypeptide is Transcription factor GTE4 (GTE4) (Arabidopsis thaliana (Mouse-ear cress)).